The chain runs to 337 residues: Formamidase (337 aa).

Positions 14-257 (VVIGLVQLQL…DEIITAEVRP (244 aa)) constitute a CN hydrolase domain. Glutamate 60 acts as the Proton acceptor in catalysis. The Proton donor role is filled by lysine 129. Catalysis depends on cysteine 162, which acts as the Nucleophile.

It belongs to the carbon-nitrogen hydrolase superfamily. Aliphatic amidase family.

The catalysed reaction is formamide + H2O = formate + NH4(+). Its function is as follows. Is an aliphatic amidase with a restricted substrate specificity, as it only hydrolyzes formamide. This chain is Formamidase, found in Bradyrhizobium sp. (strain ORS 278).